The following is a 134-amino-acid chain: Large ribosomal subunit protein eL14 (134 aa).

Belongs to the eukaryotic ribosomal protein eL14 family. Component of the large ribosomal subunit (LSU). Mature yeast ribosomes consist of a small (40S) and a large (60S) subunit. The 40S small subunit contains 1 molecule of ribosomal RNA (18S rRNA) and at least 33 different proteins. The large 60S subunit contains 3 rRNA molecules (25S, 5.8S and 5S rRNA) and at least 46 different proteins.

The protein resides in the cytoplasm. The protein localises to the nucleus. Its function is as follows. Component of the ribosome, a large ribonucleoprotein complex responsible for the synthesis of proteins in the cell. The small ribosomal subunit (SSU) binds messenger RNAs (mRNAs) and translates the encoded message by selecting cognate aminoacyl-transfer RNA (tRNA) molecules. The large subunit (LSU) contains the ribosomal catalytic site termed the peptidyl transferase center (PTC), which catalyzes the formation of peptide bonds, thereby polymerizing the amino acids delivered by tRNAs into a polypeptide chain. The nascent polypeptides leave the ribosome through a tunnel in the LSU and interact with protein factors that function in enzymatic processing, targeting, and the membrane insertion of nascent chains at the exit of the ribosomal tunnel. In Schizosaccharomyces pombe (strain 972 / ATCC 24843) (Fission yeast), this protein is Large ribosomal subunit protein eL14 (rpl14).